Reading from the N-terminus, the 234-residue chain is Small ribosomal subunit protein uS2c (234 aa).

This sequence belongs to the universal ribosomal protein uS2 family.

The protein resides in the plastid. It is found in the chloroplast. The sequence is that of Small ribosomal subunit protein uS2c (rps2) from Pinus thunbergii (Japanese black pine).